A 257-amino-acid chain; its full sequence is BTB/POZ domain-containing protein KCTD1 (257 aa).

The segment at 1–25 (MSRPLITRSPASPLNNQGIPTPAQL) is disordered. Residues Ser9 and Ser12 each carry the phosphoserine modification. A compositionally biased stretch (polar residues) spans 9–25 (SPASPLNNQGIPTPAQL). The BTB domain occupies 30 to 100 (APVHIDVGGH…LRTSKLLIPD (71 aa)).

In terms of assembly, forms homopentamers. Interacts with KCTD15, probably forming heteropentamers depending on its abundance in a cell-type dependent manner. Interacts with TFAP2A, TFAP2B and TFAP2C via the BTB domain. Post-translationally, sumoylated.

It localises to the nucleus. Its function is as follows. May repress the transcriptional activity of AP-2 family members, including TFAP2A, TFAP2B and TFAP2C to various extent. The polypeptide is BTB/POZ domain-containing protein KCTD1 (Kctd1) (Rattus norvegicus (Rat)).